Here is a 249-residue protein sequence, read N- to C-terminus: Indole-3-glycerol phosphate synthase (249 aa).

This sequence belongs to the TrpC family.

The catalysed reaction is 1-(2-carboxyphenylamino)-1-deoxy-D-ribulose 5-phosphate + H(+) = (1S,2R)-1-C-(indol-3-yl)glycerol 3-phosphate + CO2 + H2O. Its pathway is amino-acid biosynthesis; L-tryptophan biosynthesis; L-tryptophan from chorismate: step 4/5. In Pyrobaculum neutrophilum (strain DSM 2338 / JCM 9278 / NBRC 100436 / V24Sta) (Thermoproteus neutrophilus), this protein is Indole-3-glycerol phosphate synthase.